Here is a 930-residue protein sequence, read N- to C-terminus: Serine/threonine-protein kinase PknD (930 aa).

The Protein kinase domain maps to 4–291; the sequence is YDIIRMIGKG…ALKADIEQHL (288 aa). ATP is bound by residues 10–18 and Lys-33; that span reads IGKGGMGEV. Asp-138 (proton acceptor) is an active-site residue.

This sequence belongs to the protein kinase superfamily. Ser/Thr protein kinase family. Post-translationally, autophosphorylated on serine and threonine residues.

The catalysed reaction is L-seryl-[protein] + ATP = O-phospho-L-seryl-[protein] + ADP + H(+). The enzyme catalyses L-threonyl-[protein] + ATP = O-phospho-L-threonyl-[protein] + ADP + H(+). Functionally, together with the serine/threonine kinase Pkn1, may play a role in the specific interactions with host proteins during intracellular growth. This Chlamydia caviae (strain ATCC VR-813 / DSM 19441 / 03DC25 / GPIC) (Chlamydophila caviae) protein is Serine/threonine-protein kinase PknD.